The primary structure comprises 877 residues: Alanine--tRNA ligase (877 aa).

Positions 567, 571, 669, and 673 each coordinate Zn(2+).

The protein belongs to the class-II aminoacyl-tRNA synthetase family. Zn(2+) serves as cofactor.

It is found in the cytoplasm. The catalysed reaction is tRNA(Ala) + L-alanine + ATP = L-alanyl-tRNA(Ala) + AMP + diphosphate. Functionally, catalyzes the attachment of alanine to tRNA(Ala) in a two-step reaction: alanine is first activated by ATP to form Ala-AMP and then transferred to the acceptor end of tRNA(Ala). Also edits incorrectly charged Ser-tRNA(Ala) and Gly-tRNA(Ala) via its editing domain. The polypeptide is Alanine--tRNA ligase (Rickettsia rickettsii (strain Iowa)).